Reading from the N-terminus, the 250-residue chain is Pyrroloquinoline-quinone synthase (250 aa).

Belongs to the PqqC family.

The enzyme catalyses 6-(2-amino-2-carboxyethyl)-7,8-dioxo-1,2,3,4,7,8-hexahydroquinoline-2,4-dicarboxylate + 3 O2 = pyrroloquinoline quinone + 2 H2O2 + 2 H2O + H(+). The protein operates within cofactor biosynthesis; pyrroloquinoline quinone biosynthesis. Functionally, ring cyclization and eight-electron oxidation of 3a-(2-amino-2-carboxyethyl)-4,5-dioxo-4,5,6,7,8,9-hexahydroquinoline-7,9-dicarboxylic-acid to PQQ. The protein is Pyrroloquinoline-quinone synthase of Xanthomonas axonopodis pv. citri (strain 306).